The following is a 207-amino-acid chain: N-(5'-phosphoribosyl)anthranilate isomerase (207 aa).

Belongs to the TrpF family.

It catalyses the reaction N-(5-phospho-beta-D-ribosyl)anthranilate = 1-(2-carboxyphenylamino)-1-deoxy-D-ribulose 5-phosphate. Its pathway is amino-acid biosynthesis; L-tryptophan biosynthesis; L-tryptophan from chorismate: step 3/5. The protein is N-(5'-phosphoribosyl)anthranilate isomerase of Legionella pneumophila (strain Lens).